The following is a 101-amino-acid chain: NAD(P)H-quinone oxidoreductase subunit 4L, chloroplastic (101 aa).

The next 3 membrane-spanning stretches (helical) occupy residues 2 to 22 (MLEY…YGLI), 32 to 52 (MCLE…SDFF), and 61 to 81 (IFSI…PAIV).

This sequence belongs to the complex I subunit 4L family. As to quaternary structure, NDH is composed of at least 16 different subunits, 5 of which are encoded in the nucleus.

Its subcellular location is the plastid. The protein resides in the chloroplast thylakoid membrane. It carries out the reaction a plastoquinone + NADH + (n+1) H(+)(in) = a plastoquinol + NAD(+) + n H(+)(out). It catalyses the reaction a plastoquinone + NADPH + (n+1) H(+)(in) = a plastoquinol + NADP(+) + n H(+)(out). NDH shuttles electrons from NAD(P)H:plastoquinone, via FMN and iron-sulfur (Fe-S) centers, to quinones in the photosynthetic chain and possibly in a chloroplast respiratory chain. The immediate electron acceptor for the enzyme in this species is believed to be plastoquinone. Couples the redox reaction to proton translocation, and thus conserves the redox energy in a proton gradient. This Populus trichocarpa (Western balsam poplar) protein is NAD(P)H-quinone oxidoreductase subunit 4L, chloroplastic.